A 299-amino-acid polypeptide reads, in one-letter code: Ethylmalonyl-CoA decarboxylase (299 aa).

The protein belongs to the enoyl-CoA hydratase/isomerase family.

It is found in the cytoplasm. The protein resides in the cytosol. It catalyses the reaction (2S)-ethylmalonyl-CoA + H(+) = butanoyl-CoA + CO2. The enzyme catalyses (S)-methylmalonyl-CoA + H(+) = propanoyl-CoA + CO2. The catalysed reaction is (2R)-ethylmalonyl-CoA + H(+) = butanoyl-CoA + CO2. Decarboxylates ethylmalonyl-CoA, a potentially toxic metabolite, to form butyryl-CoA, suggesting it might be involved in metabolite proofreading. Acts preferentially on (S)-ethylmalonyl-CoA but also has some activity on the (R)-isomer. Also has methylmalonyl-CoA decarboxylase activity at lower level. In Xenopus tropicalis (Western clawed frog), this protein is Ethylmalonyl-CoA decarboxylase (echdc1).